A 512-amino-acid polypeptide reads, in one-letter code: MRRLIVTGIATSTAKGFRRVVNPNLLGGGAAARAFSDYREKLRTGFLHSIRFEDAFALFFEMVHSQPLPSIVDFTRLLTATANLRRYETVIYFSQKMELYGISHDLYSFTILIHCFCRCSRLSFALSVLGKMMKLGYEPSIVTFGSLLHGFCLVNRIGDAFSLVILMVKSGYEPNVVVYNTLIDGLCKNGELNIALELLNEMEKKGLGADVVTYNTLLTGLCYSGRWSDAARMLRDMMKRSINPDVVTFTALIDVFVKQGNLDEAQELYKEMIQSSVDPNNVTYNSIINGLCMHGRLYDAKKTFDLMASKGCFPNVVTYNTLISGFCKFRMVDEGMKLFQRMSCEGFNADIFTYNTLIHGYCQVGKLRVALDIFCWMVSRRVTPDIITHCILLHGLCVNGEIESALVKFDDMRESEKYIGIVAYNIMIHGLCKADKVEKAWELFCRLPVEGVKPDARTYTIMILGLCKNGPRREADELIRRMKEEGIICQMNAEDDHLEEHSSSNKEISLVS.

The transit peptide at 1-34 directs the protein to the mitochondrion; sequence MRRLIVTGIATSTAKGFRRVVNPNLLGGGAAARA. PPR repeat units lie at residues 70-104, 105-139, 140-174, 175-209, 210-244, 245-279, 280-314, 315-349, 350-384, 385-415, 420-454, and 455-489; these read SIVDFTRLLTATANLRRYETVIYFSQKMELYGISH, DLYSFTILIHCFCRCSRLSFALSVLGKMMKLGYEP, SIVTFGSLLHGFCLVNRIGDAFSLVILMVKSGYEP, NVVVYNTLIDGLCKNGELNIALELLNEMEKKGLGA, DVVTYNTLLTGLCYSGRWSDAARMLRDMMKRSINP, DVVTFTALIDVFVKQGNLDEAQELYKEMIQSSVDP, NNVTYNSIINGLCMHGRLYDAKKTFDLMASKGCFP, NVVTYNTLISGFCKFRMVDEGMKLFQRMSCEGFNA, DIFTYNTLIHGYCQVGKLRVALDIFCWMVSRRVTP, DIITHCILLHGLCVNGEIESALVKFDDMRES, GIVAYNIMIHGLCKADKVEKAWELFCRLPVEGVKP, and DARTYTIMILGLCKNGPRREADELIRRMKEEGIIC.

It belongs to the PPR family. P subfamily.

It is found in the mitochondrion. This is Pentatricopeptide repeat-containing protein At1g64583, mitochondrial from Arabidopsis thaliana (Mouse-ear cress).